We begin with the raw amino-acid sequence, 154 residues long: Myoglobin (154 aa).

The Globin domain occupies 2–148 (GLSDGEWQLV…FRKDMASNYK (147 aa)). The residue at position 4 (serine 4) is a Phosphoserine. Histidine 65 contributes to the nitrite binding site. An O2-binding site is contributed by histidine 65. Position 68 is a phosphothreonine (threonine 68). Residue histidine 94 coordinates heme b.

Belongs to the globin family. Monomeric.

The protein localises to the cytoplasm. Its subcellular location is the sarcoplasm. The catalysed reaction is Fe(III)-heme b-[protein] + nitric oxide + H2O = Fe(II)-heme b-[protein] + nitrite + 2 H(+). It carries out the reaction H2O2 + AH2 = A + 2 H2O. Its function is as follows. Monomeric heme protein which primary function is to store oxygen and facilitate its diffusion within muscle tissues. Reversibly binds oxygen through a pentacoordinated heme iron and enables its timely and efficient release as needed during periods of heightened demand. Depending on the oxidative conditions of tissues and cells, and in addition to its ability to bind oxygen, it also has a nitrite reductase activity whereby it regulates the production of bioactive nitric oxide. Under stress conditions, like hypoxia and anoxia, it also protects cells against reactive oxygen species thanks to its pseudoperoxidase activity. The protein is Myoglobin (MB) of Pongo pygmaeus (Bornean orangutan).